Here is a 186-residue protein sequence, read N- to C-terminus: ATP-dependent protease subunit HslV (186 aa).

Thr14 is a catalytic residue. Na(+)-binding residues include Ala168, Cys171, and Thr174.

This sequence belongs to the peptidase T1B family. HslV subfamily. In terms of assembly, a double ring-shaped homohexamer of HslV is capped on each side by a ring-shaped HslU homohexamer. The assembly of the HslU/HslV complex is dependent on binding of ATP.

The protein resides in the cytoplasm. It catalyses the reaction ATP-dependent cleavage of peptide bonds with broad specificity.. Its activity is regulated as follows. Allosterically activated by HslU binding. Its function is as follows. Protease subunit of a proteasome-like degradation complex believed to be a general protein degrading machinery. This chain is ATP-dependent protease subunit HslV, found in Bradyrhizobium sp. (strain ORS 278).